We begin with the raw amino-acid sequence, 631 residues long: 1-deoxy-D-xylulose-5-phosphate synthase (631 aa).

Thiamine diphosphate-binding positions include histidine 87 and 128–130; that span reads GHS. Aspartate 159 contributes to the Mg(2+) binding site. Thiamine diphosphate contacts are provided by residues 160–161, asparagine 188, phenylalanine 295, and glutamate 377; that span reads GA. Mg(2+) is bound at residue asparagine 188.

The protein belongs to the transketolase family. DXPS subfamily. As to quaternary structure, homodimer. The cofactor is Mg(2+). Requires thiamine diphosphate as cofactor.

It catalyses the reaction D-glyceraldehyde 3-phosphate + pyruvate + H(+) = 1-deoxy-D-xylulose 5-phosphate + CO2. It functions in the pathway metabolic intermediate biosynthesis; 1-deoxy-D-xylulose 5-phosphate biosynthesis; 1-deoxy-D-xylulose 5-phosphate from D-glyceraldehyde 3-phosphate and pyruvate: step 1/1. Catalyzes the acyloin condensation reaction between C atoms 2 and 3 of pyruvate and glyceraldehyde 3-phosphate to yield 1-deoxy-D-xylulose-5-phosphate (DXP). The chain is 1-deoxy-D-xylulose-5-phosphate synthase from Pseudomonas putida (strain ATCC 700007 / DSM 6899 / JCM 31910 / BCRC 17059 / LMG 24140 / F1).